Reading from the N-terminus, the 300-residue chain is MSNEDTYKRLVVVTGMSGAGKSVAIQCLEDLGYFCVDNLPPILLPKFIELMNNNTESLSRVAIGIDLRGKDFFNSLQEEIQNIINLNEVLVQVLFVEASDHILVSRYKETRRTHPLQDNISLIDAIQEERKLLADLRGVATHIIDSSESKPKALRSKVIEIFGSGKDNIFTINVMSFGFKHGLPIDADIVFDVRFLPNPYYIEEMRKLTGLDPLVYDYVMKWKETEMFYQKLIDLLKFVIPGYMREGKSQVVIAIGCTGGQHRSVALSERISNELKDFFDFELHTRHRDALIEGTINEKA.

15–22 (GMSGAGKS) is a binding site for ATP. 66–69 (DLRG) contacts GTP.

This sequence belongs to the RapZ-like family.

Functionally, displays ATPase and GTPase activities. This Macrococcus caseolyticus (strain JCSC5402) (Macrococcoides caseolyticum) protein is Nucleotide-binding protein MCCL_0516.